The primary structure comprises 185 residues: Recombination protein RecR (185 aa).

The C4-type zinc-finger motif lies at 44–59 (CSVCFHLSSEPVCEIC). The region spanning 67 to 161 (NTICVVADSR…KVTRIAFGLP (95 aa)) is the Toprim domain.

Belongs to the RecR family.

In terms of biological role, may play a role in DNA repair. It seems to be involved in an RecBC-independent recombinational process of DNA repair. It may act with RecF and RecO. This Trichormus variabilis (strain ATCC 29413 / PCC 7937) (Anabaena variabilis) protein is Recombination protein RecR.